Consider the following 115-residue polypeptide: NADH-ubiquinone oxidoreductase chain 3 (115 aa).

The next 3 membrane-spanning stretches (helical) occupy residues 3–23 (LILM…IVAF), 56–76 (FFLV…LLPL), and 84–104 (PTLM…GLIY).

The protein belongs to the complex I subunit 3 family.

Its subcellular location is the mitochondrion membrane. It catalyses the reaction a ubiquinone + NADH + 5 H(+)(in) = a ubiquinol + NAD(+) + 4 H(+)(out). In terms of biological role, core subunit of the mitochondrial membrane respiratory chain NADH dehydrogenase (Complex I) that is believed to belong to the minimal assembly required for catalysis. Complex I functions in the transfer of electrons from NADH to the respiratory chain. The immediate electron acceptor for the enzyme is believed to be ubiquinone. This Polypterus ornatipinnis (Ornate bichir) protein is NADH-ubiquinone oxidoreductase chain 3 (MT-ND3).